Consider the following 510-residue polypeptide: Histidine ammonia-lyase (510 aa).

The 5-imidazolinone (Ala-Gly) cross-link spans 143 to 145; the sequence is ASG. Ser-144 is subject to 2,3-didehydroalanine (Ser).

The protein belongs to the PAL/histidase family. Contains an active site 4-methylidene-imidazol-5-one (MIO), which is formed autocatalytically by cyclization and dehydration of residues Ala-Ser-Gly.

It localises to the cytoplasm. It carries out the reaction L-histidine = trans-urocanate + NH4(+). It participates in amino-acid degradation; L-histidine degradation into L-glutamate; N-formimidoyl-L-glutamate from L-histidine: step 1/3. The sequence is that of Histidine ammonia-lyase from Yersinia pseudotuberculosis serotype I (strain IP32953).